The following is a 317-amino-acid chain: Nuclear distribution protein nudE homolog (317 aa).

Positions 29–180 (TDVKQEYDEF…LKQELNVKSR (152 aa)) form a coiled coil. Positions 186 to 205 (NGTSVPTANDTNTVNSSMNS) are disordered.

The protein belongs to the nudE family.

The protein resides in the cytoplasm. It localises to the cytoskeleton. Its subcellular location is the microtubule organizing center. The protein localises to the centrosome. It is found in the spindle. Its function is as follows. Chaperone protein with functions in nuclear localization. Required for centrosome duplication and formation and function of the mitotic spindle. In postmitotic neurons, acts with nudC downstream of dar1 to ensure correct positioning of the nuclei in primary dendrites and as a consequence, is required for determining multipolar neuron morphology. The protein is Nuclear distribution protein nudE homolog of Drosophila melanogaster (Fruit fly).